A 258-amino-acid chain; its full sequence is Isoprenyl transferase (258 aa).

The active site involves D24. D24 provides a ligand contact to Mg(2+). Residues 25–28 (GNGR), W29, R37, H41, and 69–71 (SSE) contribute to the substrate site. The Proton acceptor role is filled by N72. Residues W73, R75, R190, and 196 to 198 (RIS) contribute to the substrate site. E209 lines the Mg(2+) pocket.

Belongs to the UPP synthase family. As to quaternary structure, homodimer. It depends on Mg(2+) as a cofactor.

Functionally, catalyzes the condensation of isopentenyl diphosphate (IPP) with allylic pyrophosphates generating different type of terpenoids. This is Isoprenyl transferase from Ralstonia nicotianae (strain ATCC BAA-1114 / GMI1000) (Ralstonia solanacearum).